Consider the following 374-residue polypeptide: Biotin synthase (374 aa).

In terms of domain architecture, Radical SAM core spans 49–276; sequence NEVQVSTLLS…KSHVRLSAGR (228 aa). The [4Fe-4S] cluster site is built by cysteine 64, cysteine 68, and cysteine 71. Positions 108, 139, 199, and 271 each coordinate [2Fe-2S] cluster. The disordered stretch occupies residues 344-374; it reads QQQEQAEGSNDLFIDATKPKVAAKQQHATEA.

It belongs to the radical SAM superfamily. Biotin synthase family. In terms of assembly, homodimer. Requires [4Fe-4S] cluster as cofactor. It depends on [2Fe-2S] cluster as a cofactor.

It carries out the reaction (4R,5S)-dethiobiotin + (sulfur carrier)-SH + 2 reduced [2Fe-2S]-[ferredoxin] + 2 S-adenosyl-L-methionine = (sulfur carrier)-H + biotin + 2 5'-deoxyadenosine + 2 L-methionine + 2 oxidized [2Fe-2S]-[ferredoxin]. Its pathway is cofactor biosynthesis; biotin biosynthesis; biotin from 7,8-diaminononanoate: step 2/2. Catalyzes the conversion of dethiobiotin (DTB) to biotin by the insertion of a sulfur atom into dethiobiotin via a radical-based mechanism. This is Biotin synthase from Alteromonas mediterranea (strain DSM 17117 / CIP 110805 / LMG 28347 / Deep ecotype).